The chain runs to 178 residues: Ribosome maturation factor RimM (178 aa).

The PRC barrel domain maps to 93-170 (EGSYYYHELR…ALTADAPAGL (78 aa)).

Belongs to the RimM family. In terms of assembly, binds ribosomal protein uS19.

Its subcellular location is the cytoplasm. Its function is as follows. An accessory protein needed during the final step in the assembly of 30S ribosomal subunit, possibly for assembly of the head region. Essential for efficient processing of 16S rRNA. May be needed both before and after RbfA during the maturation of 16S rRNA. It has affinity for free ribosomal 30S subunits but not for 70S ribosomes. This chain is Ribosome maturation factor RimM, found in Deinococcus geothermalis (strain DSM 11300 / CIP 105573 / AG-3a).